Reading from the N-terminus, the 428-residue chain is Adenylosuccinate synthetase (428 aa).

GTP-binding positions include 12 to 18 (GDEGKGK) and 40 to 42 (GHT). D13 (proton acceptor) is an active-site residue. 2 residues coordinate Mg(2+): D13 and G40. Residues 13 to 16 (DEGK), 38 to 41 (NAGH), T128, R142, Q223, T238, and R302 each bind IMP. The active-site Proton donor is H41. 298 to 304 (TTTGRPR) serves as a coordination point for substrate. GTP is bound by residues R304, 330–332 (SID), and 412–414 (SVG).

It belongs to the adenylosuccinate synthetase family. Homodimer. Mg(2+) serves as cofactor.

It is found in the cytoplasm. The catalysed reaction is IMP + L-aspartate + GTP = N(6)-(1,2-dicarboxyethyl)-AMP + GDP + phosphate + 2 H(+). The protein operates within purine metabolism; AMP biosynthesis via de novo pathway; AMP from IMP: step 1/2. Plays an important role in the de novo pathway of purine nucleotide biosynthesis. Catalyzes the first committed step in the biosynthesis of AMP from IMP. This Geobacillus sp. (strain WCH70) protein is Adenylosuccinate synthetase.